The primary structure comprises 221 residues: Ktr system potassium uptake protein C (221 aa).

The RCK N-terminal domain occupies 2–118; that stretch reads KKEFAVIGLG…LSKIGADHIV (117 aa). Residues R12, 32–34, 52–53, 74–76, 99–101, H105, and E121 contribute to the NAD(+) site; these read DID, DS, IGE, and KAQ. The RCK C-terminal domain occupies 135–219; the sequence is NNVLDYLELS…ISRFEKRVLH (85 aa).

The protein belongs to the KtrA potassium transport family. As to quaternary structure, homodimer, tetramer (dimer of homodimer) and octamer (tetramer of homodimer). Part of the KtrCD complex formed by an octameric catalytic ring of KtrC and a membrane associated dimer of KtrD forming a potassium channel.

The protein resides in the cell membrane. In terms of biological role, catalytic subunit of the KtrCD potassium uptake transporter. The 2 major potassium transporter complexes KtrAB and KtrCD confer resistance to both suddenly imposed and prolonged osmotic stress. The chain is Ktr system potassium uptake protein C (ktrC) from Bacillus subtilis (strain 168).